Here is a 443-residue protein sequence, read N- to C-terminus: Threonine/serine transporter TdcC (443 aa).

11 consecutive transmembrane segments (helical) span residues 24 to 44 (WVLG…PISA), 45 to 65 (GIGG…IAFF), 95 to 115 (VGGV…LWIY), 140 to 160 (VVAL…KDLM), 163 to 183 (VMGY…LSLI), 207 to 227 (ILVT…FSPI), 259 to 279 (ASVL…FTLS), 319 to 339 (ASII…LGTL), 363 to 383 (LNMI…YINP), 385 to 405 (ILDL…CLLP), and 423 to 443 (SNYF…YQLM).

This sequence belongs to the amino acid/polyamine transporter 2 family. SdaC/TdcC subfamily.

It localises to the cell inner membrane. The catalysed reaction is L-threonine(in) + H(+)(in) = L-threonine(out) + H(+)(out). It catalyses the reaction L-serine(in) + H(+)(in) = L-serine(out) + H(+)(out). Involved in the import of threonine and serine into the cell, with the concomitant import of a proton (symport system). In Edwardsiella tarda, this protein is Threonine/serine transporter TdcC.